The following is a 636-amino-acid chain: Leucine-rich repeat and fibronectin type-III domain-containing protein 4 (636 aa).

Residues 1–16 form the signal peptide; that stretch reads MAPPLLLLLLASGAAA. The 32-residue stretch at 17 to 48 folds into the LRRNT domain; it reads CPLPCVCQNLSESLSTLCAHRGLLFVPPNVDR. The Extracellular segment spans residues 17 to 518; sequence CPLPCVCQNL…LQAHVLGGTL (502 aa). 2 N-linked (GlcNAc...) asparagine glycosylation sites follow: asparagine 25 and asparagine 70. LRR repeat units follow at residues 49 to 70, 73 to 94, 97 to 118, 121 to 142, 146 to 169, 170 to 191, and 194 to 215; these read RTVELRLADNFIQALGPPDFRN, GLVDLTLSRNAITRIGARSFGD, SLRSLHLDGNRLVELGSSSLRG, NLQHLILSGNQLGRIAPGAFDD, SLEDLDVSYNNLRQVPWAGIGSMP, ALHTLNLDHNLIDALPPGVFAQ, and QLSRLDLTSNRLATLAPDPLFS. The 47-residue stretch at 234–280 folds into the LRRCT domain; sequence NPLHCNCELLWLRRLARPDDLETCASPPTLAGRYFWAVPEGEFSCEP. In terms of domain architecture, Ig-like spans 281–367; the sequence is PLIARHTQRL…GEATARVELR (87 aa). An intrachain disulfide couples cysteine 302 to cysteine 351. Asparagine 324, asparagine 333, asparagine 376, and asparagine 440 each carry an N-linked (GlcNAc...) asparagine glycan. One can recognise a Fibronectin type-III domain in the interval 405–502; sequence SEPAVQVTEV…GCAHFSTLPA (98 aa). Residues 519–539 form a helical membrane-spanning segment; it reads TVAVGGVLVAALLVFTVALLV. At 540 to 636 the chain is on the cytoplasmic side; that stretch reads RGRGAGNGRL…SAERLEESVV (97 aa). Residues 556–585 form a disordered region; the sequence is VQSQTNGGTSPMPKSHPPRSPPPRPQRSCS. The span at 569–580 shows a compositional bias: pro residues; that stretch reads KSHPPRSPPPRP. Phosphoserine occurs at positions 585 and 627. The PDZ-binding motif lies at 633–636; the sequence is ESVV.

Belongs to the LRFN family. In terms of assembly, can form heteromeric complexes with LRFN1, LRFN2, LRFN3 and LRFN5. Unable to form homophilic interactions across cell junctions. Interacts with DLG1, DLG2 and DLG3. Also interacts with DLG4. Glycosylated. Expressed in brain and testis. In the brain, weak, but broad expression in the cerebral cortex and diencephalic nuclei. Also detected in other parts of the central nervous system, including the olfactory bulb, pons, cerebellum, and medulla oblongata, as well as in the peripheral nervous system, such as the ganglia of cranial nerves and the dorsal root ganglion during gestation.

The protein resides in the membrane. In terms of biological role, promotes neurite outgrowth in hippocampal neurons. May play a role in redistributing DLG4 to the cell periphery. The sequence is that of Leucine-rich repeat and fibronectin type-III domain-containing protein 4 (Lrfn4) from Mus musculus (Mouse).